The chain runs to 78 residues: UPF0291 protein SE_1024 (78 aa).

Positions 53-78 are disordered; that stretch reads TKVIDPEGNDVTPEKLKKIQEEKHNK. Basic and acidic residues predominate over residues 64 to 78; that stretch reads TPEKLKKIQEEKHNK.

Belongs to the UPF0291 family.

It localises to the cytoplasm. The protein is UPF0291 protein SE_1024 of Staphylococcus epidermidis (strain ATCC 12228 / FDA PCI 1200).